The sequence spans 450 residues: Phosphoglucosamine mutase (450 aa).

Ser101 functions as the Phosphoserine intermediate in the catalytic mechanism. Mg(2+) contacts are provided by Ser101, Asp243, Asp245, and Asp247. The residue at position 101 (Ser101) is a Phosphoserine.

This sequence belongs to the phosphohexose mutase family. It depends on Mg(2+) as a cofactor. Activated by phosphorylation.

It carries out the reaction alpha-D-glucosamine 1-phosphate = D-glucosamine 6-phosphate. In terms of biological role, catalyzes the conversion of glucosamine-6-phosphate to glucosamine-1-phosphate. In Desulfotalea psychrophila (strain LSv54 / DSM 12343), this protein is Phosphoglucosamine mutase.